A 450-amino-acid polypeptide reads, in one-letter code: C4-dicarboxylate transport protein (450 aa).

The next 9 membrane-spanning stretches (helical) occupy residues 10–30 (SLYF…HFYP), 46–66 (LIKM…IAGM), 78–98 (YALL…LIVV), 143–163 (IVGA…VIFG), 190–210 (IINM…AFTI), 224–244 (LMIC…GAIA), 291–311 (VVGL…SIYL), 332–352 (ITLL…TGSG), and 354–374 (IVLA…LALI). The disordered stretch occupies residues 428-450 (PEDDLGVAEGPTPGAAVNTTKTV).

This sequence belongs to the dicarboxylate/amino acid:cation symporter (DAACS) (TC 2.A.23) family.

The protein localises to the cell inner membrane. Functionally, responsible for the transport of dicarboxylates such as succinate, fumarate, and malate from the periplasm across the membrane. This Pseudomonas syringae pv. syringae (strain B728a) protein is C4-dicarboxylate transport protein.